A 296-amino-acid chain; its full sequence is Fructose-bisphosphate aldolase class 1 (296 aa).

The active-site Proton acceptor is Glu-175. Catalysis depends on Lys-212, which acts as the Schiff-base intermediate with dihydroxyacetone-P.

This sequence belongs to the class I fructose-bisphosphate aldolase family.

The enzyme catalyses beta-D-fructose 1,6-bisphosphate = D-glyceraldehyde 3-phosphate + dihydroxyacetone phosphate. It functions in the pathway carbohydrate degradation; glycolysis; D-glyceraldehyde 3-phosphate and glycerone phosphate from D-glucose: step 4/4. In Staphylococcus haemolyticus (strain JCSC1435), this protein is Fructose-bisphosphate aldolase class 1.